A 416-amino-acid chain; its full sequence is uncharacterized protein (416 aa).

The N-acetyltransferase domain occupies 3–150 (LDVRTITPSE…SVYRAGLDAR (148 aa)). Acetyl-CoA is bound by residues 83–85 (VTV) and 91–96 (RRGLLS). Tyr-124 (proton donor) is an active-site residue. Residue Phe-416 is the Proton acceptor; via carboxylate of the active site.

It belongs to the acetyltransferase Eis family. Homohexamer; trimer of dimers.

This is an uncharacterized protein from Streptomyces griseus subsp. griseus (strain JCM 4626 / CBS 651.72 / NBRC 13350 / KCC S-0626 / ISP 5235).